A 61-amino-acid polypeptide reads, in one-letter code: Large ribosomal subunit protein bL32 (61 aa).

The protein belongs to the bacterial ribosomal protein bL32 family.

The sequence is that of Large ribosomal subunit protein bL32 from Acidithiobacillus ferrooxidans (strain ATCC 23270 / DSM 14882 / CIP 104768 / NCIMB 8455) (Ferrobacillus ferrooxidans (strain ATCC 23270)).